Reading from the N-terminus, the 458-residue chain is Protochlorophyllide reductase, chloroplastic (458 aa).

This sequence belongs to the short-chain dehydrogenases/reductases (SDR) family. POR subfamily.

The protein resides in the plastid. It localises to the chloroplast. The enzyme catalyses chlorophyllide a + NADP(+) = protochlorophyllide a + NADPH + H(+). Its pathway is porphyrin-containing compound metabolism; chlorophyll biosynthesis. In terms of biological role, phototransformation of protochlorophyllide (Pchlide) to chlorophyllide (Chlide). The protein is Protochlorophyllide reductase, chloroplastic (PORA) of Marchantia paleacea (Liverwort).